A 350-amino-acid chain; its full sequence is GTPase Obg (350 aa).

In terms of domain architecture, Obg spans Met1–Leu159. In terms of domain architecture, OBG-type G spans Ala160–Asp337. GTP is bound by residues Gly166 to Ser173, Phe191 to Tyr195, Asp213 to Gly216, Asn287 to Asp290, and Ser318 to Leu320. Positions 173 and 193 each coordinate Mg(2+).

This sequence belongs to the TRAFAC class OBG-HflX-like GTPase superfamily. OBG GTPase family. In terms of assembly, monomer. Mg(2+) is required as a cofactor.

The protein localises to the cytoplasm. In terms of biological role, an essential GTPase which binds GTP, GDP and possibly (p)ppGpp with moderate affinity, with high nucleotide exchange rates and a fairly low GTP hydrolysis rate. Plays a role in control of the cell cycle, stress response, ribosome biogenesis and in those bacteria that undergo differentiation, in morphogenesis control. In Xanthomonas campestris pv. campestris (strain 8004), this protein is GTPase Obg.